The chain runs to 343 residues: Aspartate carbamoyltransferase catalytic subunit (343 aa).

Positions 91 and 92 each coordinate carbamoyl phosphate. Lys-119 is a binding site for L-aspartate. Carbamoyl phosphate-binding residues include Arg-141, His-171, and Gln-174. Positions 204 and 259 each coordinate L-aspartate. Carbamoyl phosphate-binding residues include Gly-300 and Pro-301.

This sequence belongs to the aspartate/ornithine carbamoyltransferase superfamily. ATCase family. Heterododecamer (2C3:3R2) of six catalytic PyrB chains organized as two trimers (C3), and six regulatory PyrI chains organized as three dimers (R2).

It carries out the reaction carbamoyl phosphate + L-aspartate = N-carbamoyl-L-aspartate + phosphate + H(+). The protein operates within pyrimidine metabolism; UMP biosynthesis via de novo pathway; (S)-dihydroorotate from bicarbonate: step 2/3. Its function is as follows. Catalyzes the condensation of carbamoyl phosphate and aspartate to form carbamoyl aspartate and inorganic phosphate, the committed step in the de novo pyrimidine nucleotide biosynthesis pathway. The polypeptide is Aspartate carbamoyltransferase catalytic subunit (Burkholderia multivorans (strain ATCC 17616 / 249)).